Reading from the N-terminus, the 439-residue chain is Proline--tRNA ligase (439 aa).

The protein belongs to the class-II aminoacyl-tRNA synthetase family. ProS type 2 subfamily. As to quaternary structure, homodimer.

Its subcellular location is the cytoplasm. It catalyses the reaction tRNA(Pro) + L-proline + ATP = L-prolyl-tRNA(Pro) + AMP + diphosphate. Functionally, catalyzes the attachment of proline to tRNA(Pro) in a two-step reaction: proline is first activated by ATP to form Pro-AMP and then transferred to the acceptor end of tRNA(Pro). This chain is Proline--tRNA ligase, found in Rhodopseudomonas palustris (strain BisA53).